The chain runs to 284 residues: Nucleotide-binding protein PputGB1_0956 (284 aa).

8–15 (GRSGSGKS) is a binding site for ATP. 60–63 (DARN) is a binding site for GTP.

This sequence belongs to the RapZ-like family.

In terms of biological role, displays ATPase and GTPase activities. The polypeptide is Nucleotide-binding protein PputGB1_0956 (Pseudomonas putida (strain GB-1)).